The primary structure comprises 252 residues: Small ribosomal subunit protein eS1B (252 aa).

A2 carries the post-translational modification N-acetylalanine; partial. Phosphoserine is present on S251.

Belongs to the eukaryotic ribosomal protein eS1 family. In terms of assembly, component of the small ribosomal subunit (SSU). Mature yeast ribosomes consist of a small (40S) and a large (60S) subunit. The 40S small subunit contains 1 molecule of ribosomal RNA (18S rRNA) and at least 33 different proteins. The large 60S subunit contains 3 rRNA molecules (25S, 5.8S and 5S rRNA) and at least 46 different proteins. eS1 interacts directly with uS11 and eS26, which form part of the mRNA exit tunnel.

Its subcellular location is the cytoplasm. Component of the ribosome, a large ribonucleoprotein complex responsible for the synthesis of proteins in the cell. The small ribosomal subunit (SSU) binds messenger RNAs (mRNAs) and translates the encoded message by selecting cognate aminoacyl-transfer RNA (tRNA) molecules. The large subunit (LSU) contains the ribosomal catalytic site termed the peptidyl transferase center (PTC), which catalyzes the formation of peptide bonds, thereby polymerizing the amino acids delivered by tRNAs into a polypeptide chain. The nascent polypeptides leave the ribosome through a tunnel in the LSU and interact with protein factors that function in enzymatic processing, targeting, and the membrane insertion of nascent chains at the exit of the ribosomal tunnel. This is Small ribosomal subunit protein eS1B (rps102) from Schizosaccharomyces pombe (strain 972 / ATCC 24843) (Fission yeast).